A 90-amino-acid polypeptide reads, in one-letter code: Acylphosphatase (90 aa).

The Acylphosphatase-like domain maps to 5–90; the sequence is GCKVIVSGIV…YQKTNDFIAC (86 aa). Active-site residues include arginine 20 and asparagine 38.

It belongs to the acylphosphatase family.

It carries out the reaction an acyl phosphate + H2O = a carboxylate + phosphate + H(+). The protein is Acylphosphatase (acyP) of Psychromonas ingrahamii (strain DSM 17664 / CCUG 51855 / 37).